The chain runs to 100 residues: Large ribosomal subunit protein uL23 (100 aa).

The protein belongs to the universal ribosomal protein uL23 family. Part of the 50S ribosomal subunit. Contacts protein L29, and trigger factor when it is bound to the ribosome.

In terms of biological role, one of the early assembly proteins it binds 23S rRNA. One of the proteins that surrounds the polypeptide exit tunnel on the outside of the ribosome. Forms the main docking site for trigger factor binding to the ribosome. In Mycobacterium leprae (strain Br4923), this protein is Large ribosomal subunit protein uL23.